A 647-amino-acid chain; its full sequence is Protein FAM161B (647 aa).

Disordered stretches follow at residues 1–39 (MTVGRPEGAPGGAEGSRQIFPPESFADTEAGEELSGDGL), 89–110 (SDPESDENLSEDEEDLESFFQD), and 135–167 (LNNLPSNIPRPQTQPPSGSRPPSQHRSVSSWAS). Over residues 91–105 (PESDENLSEDEEDLE) the composition is skewed to acidic residues. Residues 262 to 292 (LEKEEQLKEAARQRDLAATAEAKISKQKATR) are a coiled coil. Residues 332–350 (PIASSSNRANPQPRTATRT) are compositionally biased toward polar residues. Disordered stretches follow at residues 332 to 352 (PIASSSNRANPQPRTATRTQQ) and 388 to 439 (KRRE…RSRS). The stretch at 510-546 (LEEVFKAKLKENRNNDRKRAKEYKKELEEMKQRIQTR) forms a coiled coil. Residues 583–647 (KGQGTRAVQE…QSPENLVSLA (65 aa)) are disordered. A compositionally biased stretch (basic and acidic residues) spans 590 to 602 (VQEKETKIKDFPR). Positions 637–647 (HQSPENLVSLA) are enriched in polar residues.

Belongs to the FAM161 family. In terms of assembly, interacts with FAM161A. As to expression, ubiquitously expressed.

This Homo sapiens (Human) protein is Protein FAM161B (FAM161B).